Here is a 268-residue protein sequence, read N- to C-terminus: Stomatin homolog PYRAB06580 (268 aa).

The helical transmembrane segment at 1–21 (MILPTNFFVTTIILLFILIFL) threads the bilayer. 2 coiled-coil regions span residues 125–152 (GQAH…EATD) and 178–213 (KQAE…ISEH).

Belongs to the band 7/mec-2 family. In terms of assembly, homotrimer.

It is found in the membrane. The protein is Stomatin homolog PYRAB06580 of Pyrococcus abyssi (strain GE5 / Orsay).